The chain runs to 332 residues: Tetraacyldisaccharide 4'-kinase (332 aa).

Position 53-60 (53-60 (SVGGNGKT)) interacts with ATP.

Belongs to the LpxK family.

The catalysed reaction is a lipid A disaccharide + ATP = a lipid IVA + ADP + H(+). It functions in the pathway glycolipid biosynthesis; lipid IV(A) biosynthesis; lipid IV(A) from (3R)-3-hydroxytetradecanoyl-[acyl-carrier-protein] and UDP-N-acetyl-alpha-D-glucosamine: step 6/6. Functionally, transfers the gamma-phosphate of ATP to the 4'-position of a tetraacyldisaccharide 1-phosphate intermediate (termed DS-1-P) to form tetraacyldisaccharide 1,4'-bis-phosphate (lipid IVA). The sequence is that of Tetraacyldisaccharide 4'-kinase from Haemophilus influenzae (strain 86-028NP).